The following is a 692-amino-acid chain: Enzymatic polyprotein (692 aa).

Catalysis depends on Asp36, which acts as the For protease activity. The region spanning 227–411 is the Reverse transcriptase domain; sequence LKKGLIRESQ…QEIEYLGLKI (185 aa).

Belongs to the caulimoviridae enzymatic polyprotein family.

It carries out the reaction DNA(n) + a 2'-deoxyribonucleoside 5'-triphosphate = DNA(n+1) + diphosphate. In terms of biological role, encodes for at least two polypeptides: protease (PR) and reverse transcriptase (RT). The protease processes the polyprotein in cis. Reverse transcriptase is multifunctional enzyme that converts the viral RNA genome into dsDNA in viral cytoplasmic capsids. This enzyme displays a DNA polymerase activity that can copy either DNA or RNA templates, and a ribonuclease H (RNase H) activity that cleaves the RNA strand of RNA-DNA heteroduplexes in a partially processive 3'- to 5'-endonucleasic mode. Neo-synthesized pregenomic RNA (pgRNA) are encapsidated, and reverse-transcribed inside the nucleocapsid. Partial (+)DNA is synthesized from the (-)DNA template and generates the relaxed circular DNA (RC-DNA) genome. After budding and infection, the RC-DNA migrates in the nucleus, and is converted into a plasmid-like covalently closed circular DNA (cccDNA). The chain is Enzymatic polyprotein from Soybean chlorotic mottle virus.